The chain runs to 210 residues: Glutathione S-transferase P 2 (210 aa).

The 82-residue stretch at 1 to 82 (SGYTLTYFPL…LLARYGLSGS (82 aa)) folds into the GST N-terminal domain. Glutathione-binding positions include tyrosine 7, arginine 13, tryptophan 38, lysine 46, 53-54 (QI), and 66-67 (QS). The region spanning 83-204 (NEREIAINEM…KSEGRKRRPI (122 aa)) is the GST C-terminal domain.

The protein belongs to the GST superfamily. Pi family. Homodimer. As to expression, liver, kidney, muscle, skin, lung and ovary.

The catalysed reaction is RX + glutathione = an S-substituted glutathione + a halide anion + H(+). Functionally, conjugation of reduced glutathione to a wide number of exogenous and endogenous hydrophobic electrophiles. This is Glutathione S-transferase P 2 from Bufo bufo (European toad).